A 208-amino-acid chain; its full sequence is Protein-methionine-sulfoxide reductase heme-binding subunit MsrQ (208 aa).

6 helical membrane-spanning segments follow: residues 16-36 (IAVF…FVGG), 53-73 (WGLI…LWGW), 82-102 (MVGL…IGLD), 118-138 (TYIT…VTST), 156-176 (LVYP…KADL), and 178-198 (EPLI…VPAV).

The protein belongs to the MsrQ family. As to quaternary structure, heterodimer of a catalytic subunit (MsrP) and a heme-binding subunit (MsrQ). FMN is required as a cofactor. The cofactor is heme b.

The protein localises to the cell inner membrane. Its function is as follows. Part of the MsrPQ system that repairs oxidized periplasmic proteins containing methionine sulfoxide residues (Met-O), using respiratory chain electrons. Thus protects these proteins from oxidative-stress damage caused by reactive species of oxygen and chlorine generated by the host defense mechanisms. MsrPQ is essential for the maintenance of envelope integrity under bleach stress, rescuing a wide series of structurally unrelated periplasmic proteins from methionine oxidation. MsrQ provides electrons for reduction to the reductase catalytic subunit MsrP, using the quinone pool of the respiratory chain. In Rhodospirillum rubrum (strain ATCC 11170 / ATH 1.1.1 / DSM 467 / LMG 4362 / NCIMB 8255 / S1), this protein is Protein-methionine-sulfoxide reductase heme-binding subunit MsrQ.